The primary structure comprises 173 residues: Crossover junction endodeoxyribonuclease RuvC (173 aa).

Residues D8, E67, and D139 contribute to the active site. Residues D8, E67, and D139 each coordinate Mg(2+).

The protein belongs to the RuvC family. As to quaternary structure, homodimer which binds Holliday junction (HJ) DNA. The HJ becomes 2-fold symmetrical on binding to RuvC with unstacked arms; it has a different conformation from HJ DNA in complex with RuvA. In the full resolvosome a probable DNA-RuvA(4)-RuvB(12)-RuvC(2) complex forms which resolves the HJ. It depends on Mg(2+) as a cofactor.

Its subcellular location is the cytoplasm. The catalysed reaction is Endonucleolytic cleavage at a junction such as a reciprocal single-stranded crossover between two homologous DNA duplexes (Holliday junction).. Its function is as follows. The RuvA-RuvB-RuvC complex processes Holliday junction (HJ) DNA during genetic recombination and DNA repair. Endonuclease that resolves HJ intermediates. Cleaves cruciform DNA by making single-stranded nicks across the HJ at symmetrical positions within the homologous arms, yielding a 5'-phosphate and a 3'-hydroxyl group; requires a central core of homology in the junction. The consensus cleavage sequence is 5'-(A/T)TT(C/G)-3'. Cleavage occurs on the 3'-side of the TT dinucleotide at the point of strand exchange. HJ branch migration catalyzed by RuvA-RuvB allows RuvC to scan DNA until it finds its consensus sequence, where it cleaves and resolves the cruciform DNA. The chain is Crossover junction endodeoxyribonuclease RuvC from Yersinia pseudotuberculosis serotype O:1b (strain IP 31758).